The sequence spans 250 residues: Tryptophan synthase alpha chain (250 aa).

Active-site proton acceptor residues include Glu31 and Asp42.

This sequence belongs to the TrpA family. Tetramer of two alpha and two beta chains.

The enzyme catalyses (1S,2R)-1-C-(indol-3-yl)glycerol 3-phosphate + L-serine = D-glyceraldehyde 3-phosphate + L-tryptophan + H2O. It functions in the pathway amino-acid biosynthesis; L-tryptophan biosynthesis; L-tryptophan from chorismate: step 5/5. Its function is as follows. The alpha subunit is responsible for the aldol cleavage of indoleglycerol phosphate to indole and glyceraldehyde 3-phosphate. This Staphylococcus carnosus (strain TM300) protein is Tryptophan synthase alpha chain.